A 66-amino-acid chain; its full sequence is Large ribosomal subunit protein uL29 (66 aa).

It belongs to the universal ribosomal protein uL29 family.

The protein is Large ribosomal subunit protein uL29 of Hydrogenobaculum sp. (strain Y04AAS1).